A 906-amino-acid polypeptide reads, in one-letter code: Protein translocase subunit SecA (906 aa).

Residues glutamine 90, 108–112 (GEGKT), and aspartate 503 each bind ATP. Residues 845–882 (TAAEAPASVPQPQAAVAPQPAPELVGADNGESQPQAWG) form a disordered region. A compositionally biased stretch (low complexity) spans 846–862 (AAEAPASVPQPQAAVAP). Residues cysteine 890, cysteine 892, cysteine 901, and histidine 902 each coordinate Zn(2+).

This sequence belongs to the SecA family. Monomer and homodimer. Part of the essential Sec protein translocation apparatus which comprises SecA, SecYEG and auxiliary proteins SecDF-YajC and YidC. Requires Zn(2+) as cofactor.

The protein resides in the cell inner membrane. It localises to the cytoplasm. The catalysed reaction is ATP + H2O + cellular proteinSide 1 = ADP + phosphate + cellular proteinSide 2.. In terms of biological role, part of the Sec protein translocase complex. Interacts with the SecYEG preprotein conducting channel. Has a central role in coupling the hydrolysis of ATP to the transfer of proteins into and across the cell membrane, serving both as a receptor for the preprotein-SecB complex and as an ATP-driven molecular motor driving the stepwise translocation of polypeptide chains across the membrane. The sequence is that of Protein translocase subunit SecA from Cereibacter sphaeroides (strain ATCC 17025 / ATH 2.4.3) (Rhodobacter sphaeroides).